Reading from the N-terminus, the 322-residue chain is Cytochrome c biogenesis protein CcsA (322 aa).

A run of 8 helical transmembrane segments spans residues 9–29 (ILTH…LITL), 44–64 (GMIA…IYSG), 71–91 (LYES…VPYF), 98–118 (LTTI…SGLL), 143–163 (MILS…LLVI), 226–246 (VISL…VWAN), 253–273 (WSWD…AIYL), and 287–307 (AIVA…VNLL).

The protein belongs to the CcmF/CycK/Ccl1/NrfE/CcsA family. In terms of assembly, may interact with Ccs1.

Its subcellular location is the plastid. The protein resides in the chloroplast thylakoid membrane. Its function is as follows. Required during biogenesis of c-type cytochromes (cytochrome c6 and cytochrome f) at the step of heme attachment. This Guizotia abyssinica (Niger) protein is Cytochrome c biogenesis protein CcsA.